We begin with the raw amino-acid sequence, 602 residues long: Zinc finger protein 652-B (602 aa).

The segment at 60-232 (FQDSKPTNEV…PSDKAKSEEK (173 aa)) is disordered. The segment covering 65–79 (PTNEVHAVKGERENS) has biased composition (basic and acidic residues). Composition is skewed to acidic residues over residues 80–108 (GESE…DEDE) and 148–167 (DDEG…DEEN). Basic and acidic residues predominate over residues 222 to 232 (SPSDKAKSEEK). A C2H2-type 1 zinc finger spans residues 235-258 (LTCDKCPRVFNTRWYLEKHMNVTH). The C2H2-type 2; degenerate zinc finger occupies 262–284 (QICDKCGKKFVLESELSLHLQTD). 6 C2H2-type zinc fingers span residues 289 to 312 (IQCI…KIVH), 319 to 341 (FSCE…LVAH), 347 to 369 (FTCE…SLQH), 375 to 397 (FRCE…MSIH), 403 to 425 (FMCQ…MKTH), and 431 to 453 (FICE…RRTH). The C2H2-type 9; degenerate zinc finger occupies 459–482 (YPCDVCGMRFRFSNMLKAHKEKCF). The segment at 543 to 575 (PFSHLHLHPHSHTHHLAVPPVPHLPPPPALFKS) is disordered. Over residues 545-557 (SHLHLHPHSHTHH) the composition is skewed to basic residues. The span at 561–571 (PPVPHLPPPPA) shows a compositional bias: pro residues.

This sequence belongs to the krueppel C2H2-type zinc-finger protein family.

Its subcellular location is the nucleus. May be involved in transcriptional regulation. In Xenopus laevis (African clawed frog), this protein is Zinc finger protein 652-B (znf652-b).